We begin with the raw amino-acid sequence, 367 residues long: Voltage-gated potassium channel subunit beta-2 (367 aa).

A phosphoserine mark is found at Ser9, Ser14, and Ser20. Position 28 is an asymmetric dimethylarginine; alternate (Arg28). Omega-N-methylarginine; alternate is present on Arg28. Ser31 is subject to Phosphoserine. Residues Thr56, Trp57, Gln63, and Asp85 each coordinate NADP(+). The active-site Proton donor/acceptor is Tyr90. Phosphoserine is present on Ser112. Lys124 carries the post-translational modification N6-acetyllysine. Residues Asn158, Ser188, Arg189, Gln214, Trp243, Ser244, Pro245, Leu246, Ala247, Cys248, Lys254, Tyr262, Arg264, Gly323, Ser325, Gln329, Glu332, and Asn333 each contribute to the NADP(+) site.

Belongs to the shaker potassium channel beta subunit family. As to quaternary structure, homotetramer. Interaction with tetrameric potassium channel alpha subunits gives rise to a heterooctamer. Identified in potassium channel complexes containing KCNA1, KCNA2, KCNA4, KCNA5, KCNA6, KCNAB1, KCNAB2 and KCND3. Interacts (in unphosphorylated form) with MAPRE1. Forms a ternary complex with SQSTM1 and PRKCZ. In terms of processing, phosphorylated by PRKCZ; may be regulated by incorporation in a complex composed of PRKCZ and SQSTM1. As to expression, detected in brain. Detected at basket cell terminals in cerebellum and in the juxtaparanodal region of nodes of Ranvier (at protein level). Strongest expression in brain and eye. Highest levels in brain detected in brainstem and diencephalon. Strong expression also detected in lung and heart. Moderate expression in kidney, T-lymphocytes and skeletal muscle.

It is found in the cytoplasm. The protein resides in the membrane. The protein localises to the cell membrane. It localises to the cell projection. Its subcellular location is the axon. It is found in the synapse. The protein resides in the synaptosome. The protein localises to the cytoskeleton. It catalyses the reaction hydroxyacetone + NADP(+) = methylglyoxal + NADPH + H(+). The catalysed reaction is (E)-4-oxonon-2-en-1-ol + NADP(+) = (E)-4-oxonon-2-enal + NADPH + H(+). In terms of biological role, regulatory subunit of the voltage-gated potassium (Kv) Shaker channel family. Shaker channels are composed of pore-forming and potassium-conducting alpha subunits and of regulatory beta subunits. The beta-2/KCNAB2 subunit promotes potassium channel closure via a mechanism that does not involve physical obstruction of the channel pore. Promotes the inactivation of Kv1.4/KCNA4 and Kv1.5/KCNA5 alpha subunit-containing channels. Displays nicotinamide adenine dinucleotide phosphate (NADPH)-dependent aldoketoreductase activity by catalyzing the NADPH-dependent reduction of a wide range of aldehyde and ketone substrates. Substrate specificity includes methylglyoxal, 9,10-phenanthrenequinone, prostaglandin J2, 4-nitrobenzaldehyde, 4-nitroacetophenone and 4-oxo-trans-2-nonenal (in vitro, no physiological substrate identified yet). The binding of oxidized and reduced nucleotide cofactors alters Kv channel gating and may contribute to dynamic fine tuning of cell excitability. Contributes to the regulation of nerve signaling, and prevents neuronal hyperexcitability. The polypeptide is Voltage-gated potassium channel subunit beta-2 (Mus musculus (Mouse)).